Here is a 534-residue protein sequence, read N- to C-terminus: Bifunctional pantoate ligase/cytidylate kinase (534 aa).

The segment at 1–302 is pantoate--beta-alanine ligase; the sequence is MRLLTTVAAL…LGSTRLIDNT (302 aa). 48–55 serves as a coordination point for ATP; it reads MGSLHQGH. The Proton donor role is filled by His55. Gln79 lines the (R)-pantoate pocket. Gln79 is a binding site for beta-alanine. Residue 172-175 participates in ATP binding; that stretch reads GQKD. Residue Gln178 coordinates (R)-pantoate. ATP contacts are provided by residues Val201 and 209-212; that span reads CSSR. Residues 303 to 534 are cytidylate kinase; it reads ILRDRQPIIA…DYYQQRLSQW (232 aa).

The protein in the N-terminal section; belongs to the pantothenate synthetase family. It in the C-terminal section; belongs to the cytidylate kinase family. Type 1 subfamily.

The protein localises to the cytoplasm. It catalyses the reaction (R)-pantoate + beta-alanine + ATP = (R)-pantothenate + AMP + diphosphate + H(+). It carries out the reaction CMP + ATP = CDP + ADP. The enzyme catalyses dCMP + ATP = dCDP + ADP. Its pathway is cofactor biosynthesis; (R)-pantothenate biosynthesis; (R)-pantothenate from (R)-pantoate and beta-alanine: step 1/1. Catalyzes the condensation of pantoate with beta-alanine in an ATP-dependent reaction via a pantoyl-adenylate intermediate. Functionally, catalyzes the transfer of a phosphate group from ATP to either CMP or dCMP to form CDP or dCDP and ADP, respectively. The polypeptide is Bifunctional pantoate ligase/cytidylate kinase (Trichormus variabilis (strain ATCC 29413 / PCC 7937) (Anabaena variabilis)).